The sequence spans 194 residues: ATP-dependent Clp protease proteolytic subunit (194 aa).

The active-site Nucleophile is serine 99. Histidine 124 is an active-site residue.

It belongs to the peptidase S14 family. In terms of assembly, fourteen ClpP subunits assemble into 2 heptameric rings which stack back to back to give a disk-like structure with a central cavity, resembling the structure of eukaryotic proteasomes.

It localises to the cytoplasm. The enzyme catalyses Hydrolysis of proteins to small peptides in the presence of ATP and magnesium. alpha-casein is the usual test substrate. In the absence of ATP, only oligopeptides shorter than five residues are hydrolyzed (such as succinyl-Leu-Tyr-|-NHMec, and Leu-Tyr-Leu-|-Tyr-Trp, in which cleavage of the -Tyr-|-Leu- and -Tyr-|-Trp bonds also occurs).. Its function is as follows. Cleaves peptides in various proteins in a process that requires ATP hydrolysis. Has a chymotrypsin-like activity. Plays a major role in the degradation of misfolded proteins. The sequence is that of ATP-dependent Clp protease proteolytic subunit from Borrelia garinii subsp. bavariensis (strain ATCC BAA-2496 / DSM 23469 / PBi) (Borreliella bavariensis).